A 310-amino-acid chain; its full sequence is Putative S-adenosyl-L-methionine-dependent methyltransferase Mvan_1346 (310 aa).

Residues Asp-136 and 165–166 (DL) each bind S-adenosyl-L-methionine.

This sequence belongs to the UPF0677 family.

Exhibits S-adenosyl-L-methionine-dependent methyltransferase activity. This is Putative S-adenosyl-L-methionine-dependent methyltransferase Mvan_1346 from Mycolicibacterium vanbaalenii (strain DSM 7251 / JCM 13017 / BCRC 16820 / KCTC 9966 / NRRL B-24157 / PYR-1) (Mycobacterium vanbaalenii).